The chain runs to 285 residues: Probable endonuclease 4 (285 aa).

Zn(2+) contacts are provided by His-69, His-109, Glu-145, Asp-179, His-182, His-216, Asp-229, His-231, and Glu-261.

This sequence belongs to the AP endonuclease 2 family. Zn(2+) serves as cofactor.

It carries out the reaction Endonucleolytic cleavage to 5'-phosphooligonucleotide end-products.. Its function is as follows. Endonuclease IV plays a role in DNA repair. It cleaves phosphodiester bonds at apurinic or apyrimidinic (AP) sites, generating a 3'-hydroxyl group and a 5'-terminal sugar phosphate. This chain is Probable endonuclease 4, found in Salmonella newport (strain SL254).